The following is a 571-amino-acid chain: MRTSQYLLATQKETPADAVVISHQLMLRAGMIRKLASGLYTWLPMGLRVMRKVEAVVREEMNAAGALEVLMPSIQPAELWQESGRWEQYGPELLRLKDRHQRDFCVGPTHEEVITDLARNELSSYKQLPLNMYQIQTKFRDEIRPRFGLMRGREFIMKDAYSFHADQASLQETYDRMHQAYSNVFTRLGLDFRPVQADTGSIGGSYSHEFHVLAESGEDDVIFSDSSDYAANIEKAEAIPRETVRPAPTEELRLVDTPDAKTIAQLVENHGLAIEKTVKTLIVRGAEEGKLVALVVRGDHELNEIKAAKLEQVADPLIMATDAELREAIGAGAGSLGPLNLPLEVVIDRSVALMSDFGIGANIDDKHYFGVNWERDLPVPQVADLRNVVEGDPSPDGQGTLVIKRGIEVGHIFQLGTKYSEALKCQVLGENGKPVVLSMGCYGIGVSRVVAAAIEQSYDDKGIIWNDALAPFQIALVPLRYETDVVREATDKLYAELTAAGFEVLLDDRDKKTSPGIKFADMELIGIPHRIVVSDRGLADGNLEYKHRTEQDAQALPLNEVLTFLQARVRR.

This sequence belongs to the class-II aminoacyl-tRNA synthetase family. ProS type 1 subfamily. In terms of assembly, homodimer.

The protein resides in the cytoplasm. It carries out the reaction tRNA(Pro) + L-proline + ATP = L-prolyl-tRNA(Pro) + AMP + diphosphate. Functionally, catalyzes the attachment of proline to tRNA(Pro) in a two-step reaction: proline is first activated by ATP to form Pro-AMP and then transferred to the acceptor end of tRNA(Pro). As ProRS can inadvertently accommodate and process non-cognate amino acids such as alanine and cysteine, to avoid such errors it has two additional distinct editing activities against alanine. One activity is designated as 'pretransfer' editing and involves the tRNA(Pro)-independent hydrolysis of activated Ala-AMP. The other activity is designated 'posttransfer' editing and involves deacylation of mischarged Ala-tRNA(Pro). The misacylated Cys-tRNA(Pro) is not edited by ProRS. The chain is Proline--tRNA ligase from Pseudomonas putida (strain GB-1).